Reading from the N-terminus, the 120-residue chain is Basic phospholipase A2 homolog piratoxin-3 (120 aa).

7 cysteine pairs are disulfide-bonded: Cys26–Cys113, Cys28–Cys44, Cys43–Cys94, Cys49–Cys120, Cys50–Cys87, Cys57–Cys81, and Cys75–Cys85. An important for membrane-damaging activities in eukaryotes and bacteria; heparin-binding region spans residues 104–115 (KKYRYHLKPCKK).

The protein belongs to the phospholipase A2 family. Group II subfamily. D49 sub-subfamily. In terms of assembly, homodimer; non-covalently linked (probable alternative/compact dimer conformation). As to expression, expressed by the venom gland.

The protein resides in the secreted. In terms of biological role, snake venom phospholipase A2 (PLA2) that lacks enzymatic activity. Shows high myotoxin activities. Also has anticoagulant activity. A model of myotoxic mechanism has been proposed: an apo Lys49-PLA2 is activated by the entrance of a hydrophobic molecule (e.g. fatty acid) at the hydrophobic channel of the protein leading to a reorientation of a monomer. This reorientation causes a transition between 'inactive' to 'active' states, causing alignment of C-terminal and membrane-docking sites (MDoS) side-by-side and putting the membrane-disruption sites (MDiS) in the same plane, exposed to solvent and in a symmetric position for both monomers. The MDoS region stabilizes the toxin on membrane by the interaction of charged residues with phospholipid head groups. Subsequently, the MDiS region destabilizes the membrane with penetration of hydrophobic residues. This insertion causes a disorganization of the membrane, allowing an uncontrolled influx of ions (i.e. calcium and sodium), and eventually triggering irreversible intracellular alterations and cell death. The polypeptide is Basic phospholipase A2 homolog piratoxin-3 (Bothrops pirajai (Piraja's lancehead)).